The primary structure comprises 108 residues: UPF0145 protein LGAS_1099 (108 aa).

The protein belongs to the UPF0145 family.

This chain is UPF0145 protein LGAS_1099, found in Lactobacillus gasseri (strain ATCC 33323 / DSM 20243 / BCRC 14619 / CIP 102991 / JCM 1131 / KCTC 3163 / NCIMB 11718 / NCTC 13722 / AM63).